Here is a 603-residue protein sequence, read N- to C-terminus: MAMFTTMTALTLTSLIPPITATLINPNKKNSYPHYVKTAIASAFTISLIPTTMFICLGQETIITNWCWTTTQTLQLSLSFKLDYFSMTFLPVALFVTWSIMEFSLWYMASDPNINQFFKYLLIFLITMIILITANNLLQLFIGWEGVGIMSFLLISWWYARTDANTAAIQAILYNRIGDIGFILTLAWFLLHSNSWELQQVFLLNNNPNLLPLLGLLLAAAGKSAQLGLHPWLPSAMEGPTPVSALLHSSTMVVAGIFLLIRFHPLMENNPPIQTLALCLGAITTLFAAICALTQNDIKKIVAFSTSSQLGLMMVTIGINQPHLAFLHICTHAFFKALLFMCSGSIIHNLNNEQDIRKMGGLLKTMPLTSTSLTISSLALAGMPFLSGFYSKDLIIETASMSYTNAWALSITLIATSLTSAYSTRMILHTLTGKPLLPTPISINENNPTLLNPIKRLMTGSLFTGFLITSNIPPTSLPQTTTPLYLKLAALTATLLGLLVALDLNYLANKLKVKTPPPAFYFSTMLGFYPNIIHRMIPHLSLLMSQNLSLLLLDLTWLEKLMPKAISQHQTSASTTISTQKGMIKLYFLSFLIPLLLTLLMIS.

A run of 16 helical transmembrane segments spans residues 4–24 (FTTM…ATLI), 38–58 (TAIA…ICLG), 89–109 (FLPV…WYMA), 122–142 (LIFL…QLFI), 171–191 (AILY…WFLL), 211–233 (LPLL…HPWL), 241–261 (TPVS…FLLI), 273–293 (IQTL…ICAL), 301–320 (IVAF…IGIN), 325–347 (AFLH…GSII), 366–386 (MPLT…MPFL), 405–424 (NAWA…AYST), 457–477 (LMTG…PTSL), 488–508 (LAAL…NYLA), 537–557 (IPHL…DLTW), and 582–602 (GMIK…LLMI).

Belongs to the complex I subunit 5 family. As to quaternary structure, core subunit of respiratory chain NADH dehydrogenase (Complex I) which is composed of 45 different subunits.

The protein localises to the mitochondrion inner membrane. The catalysed reaction is a ubiquinone + NADH + 5 H(+)(in) = a ubiquinol + NAD(+) + 4 H(+)(out). Functionally, core subunit of the mitochondrial membrane respiratory chain NADH dehydrogenase (Complex I) which catalyzes electron transfer from NADH through the respiratory chain, using ubiquinone as an electron acceptor. Essential for the catalytic activity and assembly of complex I. In Pongo pygmaeus (Bornean orangutan), this protein is NADH-ubiquinone oxidoreductase chain 5 (MT-ND5).